A 138-amino-acid chain; its full sequence is Nucleoside diphosphate kinase (138 aa).

Residues Lys-10, Phe-58, Arg-86, Thr-92, Arg-103, and Asn-113 each contribute to the ATP site. His-116 (pros-phosphohistidine intermediate) is an active-site residue.

The protein belongs to the NDK family. In terms of assembly, homotetramer. Requires Mg(2+) as cofactor.

It localises to the cytoplasm. It carries out the reaction a 2'-deoxyribonucleoside 5'-diphosphate + ATP = a 2'-deoxyribonucleoside 5'-triphosphate + ADP. It catalyses the reaction a ribonucleoside 5'-diphosphate + ATP = a ribonucleoside 5'-triphosphate + ADP. Major role in the synthesis of nucleoside triphosphates other than ATP. The ATP gamma phosphate is transferred to the NDP beta phosphate via a ping-pong mechanism, using a phosphorylated active-site intermediate. The chain is Nucleoside diphosphate kinase from Actinobacillus pleuropneumoniae serotype 7 (strain AP76).